The chain runs to 341 residues: Glyceraldehyde-3-phosphate dehydrogenase 2 (341 aa).

NAD(+)-binding positions include 12 to 13 (RI), arginine 78, and threonine 120. Residues 152 to 154 (SCT) and threonine 183 each bind D-glyceraldehyde 3-phosphate. Cysteine 153 (nucleophile) is an active-site residue. NAD(+) is bound at residue asparagine 184. Residues arginine 198, 211–212 (TG), and arginine 234 each bind D-glyceraldehyde 3-phosphate. Asparagine 313 lines the NAD(+) pocket.

Belongs to the glyceraldehyde-3-phosphate dehydrogenase family. Homotetramer.

The protein localises to the cytoplasm. The enzyme catalyses D-glyceraldehyde 3-phosphate + phosphate + NAD(+) = (2R)-3-phospho-glyceroyl phosphate + NADH + H(+). It functions in the pathway carbohydrate degradation; glycolysis; pyruvate from D-glyceraldehyde 3-phosphate: step 1/5. Its function is as follows. Catalyzes the oxidative phosphorylation of glyceraldehyde 3-phosphate (G3P) to 1,3-bisphosphoglycerate (BPG) using the cofactor NAD. The first reaction step involves the formation of a hemiacetal intermediate between G3P and a cysteine residue, and this hemiacetal intermediate is then oxidized to a thioester, with concomitant reduction of NAD to NADH. The reduced NADH is then exchanged with the second NAD, and the thioester is attacked by a nucleophilic inorganic phosphate to produce BPG. The chain is Glyceraldehyde-3-phosphate dehydrogenase 2 (gapA2) from Staphylococcus aureus (strain COL).